The following is a 95-amino-acid chain: Progonadoliberin-1 (95 aa).

An N-terminal signal peptide occupies residues 1–23; the sequence is MAPQTSNLWLLLVVMMVMSQGCC. Gln24 carries the post-translational modification Pyrrolidone carboxylic acid. At Gly33 the chain carries Glycine amide.

It belongs to the GnRH family.

The protein resides in the secreted. In terms of biological role, stimulates the secretion of gonadotropins. The protein is Progonadoliberin-1 (gnrh1) of Pagrus major (Red sea bream).